The sequence spans 1031 residues: uncharacterized protein (1031 aa).

The SWIM-type zinc finger occupies 50 to 85; sequence FKVQINLKTAAAHLDCSCSNDKQNCVHIIAALLKYN. The Helicase ATP-binding domain occupies 590–751; the sequence is RALEDNQFGG…WSCFDFVLPN (162 aa). Residue 603–610 coordinates ATP; sequence DEMGLGKT. The short motif at 702 to 705 is the DEAQ box element; the sequence is DEAQ. Residues 868–1022 enclose the Helicase C-terminal domain; the sequence is ALNIIYEALE…EDVNFFKSLS (155 aa).

The protein belongs to the SNF2/RAD54 helicase family.

This is an uncharacterized protein from Mycoplasma genitalium (strain ATCC 33530 / DSM 19775 / NCTC 10195 / G37) (Mycoplasmoides genitalium).